The sequence spans 204 residues: Protein OPG030 (204 aa).

The region spanning 95–177 (FLRQYINNNI…ITYSELTNAI (83 aa)) is the BACK domain.

This sequence belongs to the orthopoxvirus OPG030 family.

This chain is Protein OPG030 (OPG30), found in Homo sapiens (Human).